The sequence spans 339 residues: 7,8-didemethyl-8-hydroxy-5-deazariboflavin synthase (339 aa).

In terms of domain architecture, Radical SAM core spans 25–256 (ATYSPAYTIV…PDITIQIPPN (232 aa)). C39, C43, and C46 together coordinate [4Fe-4S] cluster.

The protein belongs to the radical SAM superfamily. CofG family. In terms of assembly, consists of two subunits, CofG and CofH. [4Fe-4S] cluster serves as cofactor.

The enzyme catalyses 5-amino-5-(4-hydroxybenzyl)-6-(D-ribitylimino)-5,6-dihydrouracil + S-adenosyl-L-methionine = 7,8-didemethyl-8-hydroxy-5-deazariboflavin + 5'-deoxyadenosine + L-methionine + NH4(+) + H(+). It functions in the pathway cofactor biosynthesis; coenzyme F0 biosynthesis. Catalyzes the radical-mediated synthesis of 7,8-didemethyl-8-hydroxy-5-deazariboflavin from 5-amino-5-(4-hydroxybenzyl)-6-(D-ribitylimino)-5,6-dihydrouracil. This is 7,8-didemethyl-8-hydroxy-5-deazariboflavin synthase from Nostoc sp. (strain PCC 7120 / SAG 25.82 / UTEX 2576).